The primary structure comprises 394 residues: Suppressor APC domain-containing protein 2 (394 aa).

Disordered stretches follow at residues 1-23 (MAGA…STEG), 95-125 (LLSA…RLVF), and 150-188 (GPSA…SSSA). Residues 177–188 (SQSAALEPSSSA) are compositionally biased toward polar residues. Residue Thr-219 is modified to Phosphothreonine. Residues 227–277 (GLLKQMKELEQEKEVLLQGLEMMARGRDWYQQQLQRVQERQRRLGQSRASA) are a coiled coil. Residue Ser-284 is modified to Phosphoserine. The stretch at 336–384 (QQQTILMLKEQNRLLTQEVTEKSERITQLEQEKSALIKQLFEARALSQQ) forms a coiled coil.

In terms of assembly, interacts with a spindle orientation complex at least composed of GNAI1, GPSM2 and NUMA1. Interacts with GPSM2 (via TPR motifs); this interaction is required to prevent GPSM2 anchoring at the mitotic apical cortex and is inhibited in presence of NUMA1 in a dose dependent manner. Interacts with PARD3. Expressed in 5-month-old fetal tissues, including stomach, intestine, colon, liver, brain, lung, heart, spleen and kidney. Undetectable in non-cancerous adult tissues. Expressed in many primary gastric carcinoma, but almost not in adjacent normal mucosa. Expressed preferentially in M and G1 phases, compared to S and G2 phases. Expression is up-regulated in hepatocellular carcinoma (HCC) and colorectal cancer (CRC) tissues (at protein level).

The protein localises to the cytoplasm. It localises to the nucleus. It is found in the cell cortex. Its subcellular location is the apical cell membrane. The protein resides in the cell junction. The protein localises to the tight junction. Functionally, plays a role in planar mitotic spindle orientation in retinal progenitor cells (RPCs) and promotes the production of symmetric terminal divisions. Negatively regulates the mitotic apical cortex localization of GPSM2. Involved also in positive regulation of cell proliferation and tumor cell growth. The protein is Suppressor APC domain-containing protein 2 of Homo sapiens (Human).